The chain runs to 301 residues: Sulfate adenylyltransferase subunit 2 (301 aa).

Belongs to the PAPS reductase family. CysD subfamily. As to quaternary structure, heterodimer composed of CysD, the smaller subunit, and CysN.

It catalyses the reaction sulfate + ATP + H(+) = adenosine 5'-phosphosulfate + diphosphate. Its pathway is sulfur metabolism; hydrogen sulfide biosynthesis; sulfite from sulfate: step 1/3. In terms of biological role, with CysN forms the ATP sulfurylase (ATPS) that catalyzes the adenylation of sulfate producing adenosine 5'-phosphosulfate (APS) and diphosphate, the first enzymatic step in sulfur assimilation pathway. APS synthesis involves the formation of a high-energy phosphoric-sulfuric acid anhydride bond driven by GTP hydrolysis by CysN coupled to ATP hydrolysis by CysD. The sequence is that of Sulfate adenylyltransferase subunit 2 from Geotalea daltonii (strain DSM 22248 / JCM 15807 / FRC-32) (Geobacter daltonii).